The primary structure comprises 48 residues: Putative ATP synthase protein 8-like protein (48 aa).

Residues 17–37 (GFLVILLTLLLLSYAFLSMIL) form a helical membrane-spanning segment.

Belongs to the ATPase protein 8 family.

The protein localises to the membrane. The polypeptide is Putative ATP synthase protein 8-like protein (Eremothecium gossypii (strain ATCC 10895 / CBS 109.51 / FGSC 9923 / NRRL Y-1056) (Yeast)).